We begin with the raw amino-acid sequence, 365 residues long: Peptide chain release factor 2 (365 aa).

At Gln-252 the chain carries N5-methylglutamine.

Belongs to the prokaryotic/mitochondrial release factor family. In terms of processing, methylated by PrmC. Methylation increases the termination efficiency of RF2.

Its subcellular location is the cytoplasm. Peptide chain release factor 2 directs the termination of translation in response to the peptide chain termination codons UGA and UAA. The protein is Peptide chain release factor 2 of Pasteurella multocida (strain Pm70).